The sequence spans 672 residues: Spermatid perinuclear RNA-binding protein (672 aa).

A DZF domain is found at 5 to 363 (RSFANDDRHV…ALKRPFEDGL (359 aa)). Disordered stretches follow at residues 52-73 (TNKG…GENY) and 349-371 (GAGS…DPNK). Basic and acidic residues predominate over residues 357–371 (RPFEDGLGDDKDPNK). A DRBM 1 domain is found at 387 to 453 (DLMNALMRLN…AVKVLQAMGY (67 aa)). A compositionally biased stretch (basic and acidic residues) spans 466 to 476 (SDEKSDNESKN). Residues 466-499 (SDEKSDNESKNETVSSNSSNNTGNSTTETSSTLE) form a disordered region. Over residues 477–497 (ETVSSNSSNNTGNSTTETSST) the composition is skewed to low complexity. The DRBM 2 domain maps to 510–576 (SGKNPVMELN…ALAALEKLFS (67 aa)). Residues R612 and R617 each carry the asymmetric dimethylarginine modification.

As to quaternary structure, interacts with EIF2AK2. Associates with microtubules; it is unsure whether such interaction is direct or indirect.

It localises to the cytoplasm. Its function is as follows. Involved in spermatogenesis and sperm function. Plays a role in regulation of cell growth. Binds to double-stranded DNA and RNA. Binds most efficiently to poly(I:C) RNA than to poly(dI:dC) DNA. Binds also to single-stranded poly(G) RNA. Binds non-specifically to the mRNA PRM1 3'-UTR and adenovirus VA RNA. The protein is Spermatid perinuclear RNA-binding protein (STRBP) of Pongo abelii (Sumatran orangutan).